Reading from the N-terminus, the 435-residue chain is NADH-ubiquinone oxidoreductase chain 4 (435 aa).

Helical transmembrane passes span 27 to 47 (VLTI…ELNG), 53 to 73 (FVMG…YLSS), 80 to 100 (ASFN…FSVS), 102 to 122 (FFLF…LIVG), 132 to 152 (AGGY…WGVS), 177 to 197 (LWWL…FHLW), 206 to 226 (PVAG…YGLL), 239 to 259 (VFFV…GLAC), 267 to 285 (CLVA…LGVL), 295 to 317 (AIII…NAIY), 324 to 344 (LLVM…MCFL), 372 to 394 (SXAF…LYLY), and 414 to 434 (LCDV…FMFM).

Belongs to the complex I subunit 4 family.

It is found in the mitochondrion membrane. It catalyses the reaction a ubiquinone + NADH + 5 H(+)(in) = a ubiquinol + NAD(+) + 4 H(+)(out). Its function is as follows. Core subunit of the mitochondrial membrane respiratory chain NADH dehydrogenase (Complex I) that is believed to belong to the minimal assembly required for catalysis. Complex I functions in the transfer of electrons from NADH to the respiratory chain. The immediate electron acceptor for the enzyme is believed to be ubiquinone. The polypeptide is NADH-ubiquinone oxidoreductase chain 4 (ND4) (Mytilus edulis (Blue mussel)).